The primary structure comprises 419 residues: Voltage-gated potassium channel subunit beta-1 (419 aa).

The segment at 1–51 (MLAARTGAAGSQIAEESSKLRKQAAFSGGSKDRSPKKASENVKDSSLSPSG) is disordered. Positions 30–43 (SKDRSPKKASENVK) are enriched in basic and acidic residues. Residues threonine 108, tryptophan 109, glutamine 115, and aspartate 137 each contribute to the NADP(+) site. Catalysis depends on tyrosine 142, which acts as the Proton donor/acceptor. Residues asparagine 210, serine 240, arginine 241, glutamine 266, tryptophan 295, serine 296, proline 297, leucine 298, alanine 299, cysteine 300, lysine 306, arginine 316, glycine 375, serine 377, glutamine 381, glutamate 384, and asparagine 385 each coordinate NADP(+).

Belongs to the shaker potassium channel beta subunit family. As to quaternary structure, homotetramer. Interaction with tetrameric potassium channel alpha subunits gives rise to a heterooctamer. Identified in potassium channel complexes containing KCNA1, KCNA2, KCNA4, KCNA5, KCNA6, KCNAB1 and KCNAB2. Part of a complex containing KCNA1, KCNA4 and LGI1; interaction with LGI1 inhibits down-regulation of KCNA1 channel activity. Interacts with the dimer formed by GNB1 and GNG2; this enhances KCNA1 binding. Interacts with SQSTM1. Detected in portal vein myocytes (at protein level).

The protein localises to the cytoplasm. The protein resides in the membrane. Its subcellular location is the cell membrane. The enzyme catalyses a primary alcohol + NADP(+) = an aldehyde + NADPH + H(+). The catalysed reaction is a secondary alcohol + NADP(+) = a ketone + NADPH + H(+). Its function is as follows. Regulatory subunit of the voltage-gated potassium (Kv) channels composed of pore-forming and potassium-conducting alpha subunits and of regulatory beta subunits. The beta-1/KCNAB1 cytoplasmic subunit mediates closure of delayed rectifier potassium channels by physically obstructing the pore via its N-terminal domain and increases the speed of channel closure for other family members. Promotes the inactivation of KCNA1, KCNA2, KCNA4, KCNA5 and KCNA6 alpha subunit-containing channels. Displays nicotinamide adenine dinucleotide phosphate (NADPH)-dependent aldoketoreductase activity by catalyzing the NADPH-dependent reduction of a variety of endogenous aldehydes and ketones. The binding of NADPH is required for efficient down-regulation of potassium channel activity. Oxidation of the bound NADPH restrains N-terminal domain from blocking the channel, thereby decreasing N-type inactivation of potassium channel activity. The chain is Voltage-gated potassium channel subunit beta-1 (KCNAB1) from Oryctolagus cuniculus (Rabbit).